Reading from the N-terminus, the 534-residue chain is MAKGEGAESGSAAGLLPTSILQASERPVQVKKEPKKKQQLSICNKLCYAVGGAPYQLTGCALGFFLQIYLLDVAKVEPLPASIILFVGRAWDAFTDPLVGFCISKSSWTRLGRLMPWIIFSTPLAIIAYFLIWFVPDFPSGTESSHGFLWYLLFYCLFETLVTCFHVPYSALTMFISTEQSERDSATAYRMTVEVLGTVIGTAIQGQIVGQAKAPCLQDQNGSVVVSEVANRTQSTASLKDTQNAYLLAAGIIASIYVLCAFILILGVREQRELYESQQAESMPFFQGLRLVMGHGPYVKLIAGFLFTSLAFMLVEGNFALFCTYTLDFRNEFQNLLLAIMLSATFTIPIWQWFLTRFGKKTAVYIGISSAVPFLILVALMERNLIVTYVVAVAAGVSVAAAFLLPWSMLPDVIDDFHLKHPHSPGTEPIFFSFYVFFTKFASGVSLGVSTLSLDFANYQRQGCSQPEQVKFTLKMLVTMAPIILILLGLLLFKLYPIDEEKRRQNKKALQALREEASSSGCSDTDSTELASIL.

Residues 1–39 (MAKGEGAESGSAAGLLPTSILQASERPVQVKKEPKKKQQ) are Cytoplasmic-facing. The helical transmembrane segment at 40 to 69 (LSICNKLCYAVGGAPYQLTGCALGFFLQIY) threads the bilayer. At 70–80 (LLDVAKVEPLP) the chain is on the extracellular side. Residues 81–101 (ASIILFVGRAWDAFTDPLVGF) form a helical membrane-spanning segment. Topologically, residues 102–113 (CISKSSWTRLGR) are cytoplasmic. A helical membrane pass occupies residues 114–133 (LMPWIIFSTPLAIIAYFLIW). Residues 134-148 (FVPDFPSGTESSHGF) lie on the Extracellular side of the membrane. A helical membrane pass occupies residues 149–173 (LWYLLFYCLFETLVTCFHVPYSALT). At 174–180 (MFISTEQ) the chain is on the cytoplasmic side. A helical transmembrane segment spans residues 181-212 (SERDSATAYRMTVEVLGTVIGTAIQGQIVGQA). Over 213–232 (KAPCLQDQNGSVVVSEVANR) the chain is Extracellular. A disulfide bridge links cysteine 216 with cysteine 464. Residues asparagine 221 and asparagine 231 are each glycosylated (N-linked (GlcNAc...) asparagine). The chain crosses the membrane as a helical span at residues 233-266 (TQSTASLKDTQNAYLLAAGIIASIYVLCAFILIL). The Cytoplasmic segment spans residues 267-297 (GVREQRELYESQQAESMPFFQGLRLVMGHGP). Residues 298–324 (YVKLIAGFLFTSLAFMLVEGNFALFCT) traverse the membrane as a helical segment. Over 325–335 (YTLDFRNEFQN) the chain is Extracellular. Residues 336–354 (LLLAIMLSATFTIPIWQWF) traverse the membrane as a helical segment. Over 355–358 (LTRF) the chain is Cytoplasmic. A helical transmembrane segment spans residues 359–380 (GKKTAVYIGISSAVPFLILVAL). Over 381-383 (MER) the chain is Extracellular. A helical membrane pass occupies residues 384–420 (NLIVTYVVAVAAGVSVAAAFLLPWSMLPDVIDDFHLK). At 421 to 430 (HPHSPGTEPI) the chain is on the cytoplasmic side. A helical transmembrane segment spans residues 431-457 (FFSFYVFFTKFASGVSLGVSTLSLDFA). The Extracellular portion of the chain corresponds to 458–469 (NYQRQGCSQPEQ). Residues 470–493 (VKFTLKMLVTMAPIILILLGLLLF) traverse the membrane as a helical segment. Residues 494 to 534 (KLYPIDEEKRRQNKKALQALREEASSSGCSDTDSTELASIL) lie on the Cytoplasmic side of the membrane.

It belongs to the major facilitator superfamily. Post-translationally, N-glycosylated. In terms of tissue distribution, widely expressed. Exhibits an oscillatory pattern of expression in brown adipose tissue and liver consistent with a circadian rhythm. Enriched in brain micro-vessels, where it is specifically present in endothelium constituting the blood-brain barrier (at protein level).

It localises to the cell membrane. Its subcellular location is the endoplasmic reticulum membrane. The catalysed reaction is a 1-acyl-sn-glycero-3-phosphocholine(in) + Na(+)(in) = a 1-acyl-sn-glycero-3-phosphocholine(out) + Na(+)(out). It catalyses the reaction 1-(4Z,7Z,10Z,13Z,16Z,19Z-docosahexaenoyl)-sn-glycero-3-phosphocholine(in) + Na(+)(in) = 1-(4Z,7Z,10Z,13Z,16Z,19Z-docosahexaenoyl)-sn-glycero-3-phosphocholine(out) + Na(+)(out). The enzyme catalyses 1-(9Z-octadecenoyl)-sn-glycero-3-phosphocholine(in) + Na(+)(in) = 1-(9Z-octadecenoyl)-sn-glycero-3-phosphocholine(out) + Na(+)(out). It carries out the reaction 1-hexadecanoyl-sn-glycero-3-phosphocholine(in) + Na(+)(in) = 1-hexadecanoyl-sn-glycero-3-phosphocholine(out) + Na(+)(out). The catalysed reaction is a 1-acyl-sn-glycero-3-phosphoethanolamine(in) + Na(+)(in) = a 1-acyl-sn-glycero-3-phosphoethanolamine(out) + Na(+)(out). Functionally, sodium-dependent lysophosphatidylcholine (LPC) symporter, which plays an essential role for blood-brain barrier formation and function. Specifically expressed in endothelium of the blood-brain barrier of micro-vessels and transports LPC into the brain. Transport of LPC is essential because it constitutes the major mechanism by which docosahexaenoic acid (DHA), an omega-3 fatty acid that is essential for normal brain growth and cognitive function, enters the brain. Transports LPC carrying long-chain fatty acids such LPC oleate and LPC palmitate with a minimum acyl chain length of 14 carbons. Does not transport docosahexaenoic acid in unesterified fatty acid. Not required for central nervous system vascular morphogenesis. The polypeptide is Sodium-dependent lysophosphatidylcholine symporter 1 (Mus musculus (Mouse)).